Reading from the N-terminus, the 212-residue chain is Thymidylate kinase (212 aa).

10–17 (GIDGCGKT) contacts ATP.

The protein belongs to the thymidylate kinase family.

It catalyses the reaction dTMP + ATP = dTDP + ADP. Its function is as follows. Phosphorylation of dTMP to form dTDP in both de novo and salvage pathways of dTTP synthesis. The sequence is that of Thymidylate kinase from Prochlorococcus marinus (strain MIT 9301).